We begin with the raw amino-acid sequence, 155 residues long: Eosinophil cationic protein (155 aa).

The signal sequence occupies residues 1-25; the sequence is MGLKLLESRLCLLLSLGLVLMLASC. The Proton acceptor role is filled by histidine 38. Intrachain disulfides connect cysteine 47/cysteine 106, cysteine 61/cysteine 118, cysteine 79/cysteine 133, and cysteine 86/cysteine 94. 62 to 66 provides a ligand contact to substrate; sequence KDINT. Asparagine 88 and asparagine 107 each carry an N-linked (GlcNAc...) asparagine glycan. Histidine 150 acts as the Proton donor in catalysis.

Belongs to the pancreatic ribonuclease family.

The protein localises to the cytoplasmic granule. In terms of biological role, cytotoxin and helminthotoxin with ribonuclease activity. Possesses a wide variety of biological activities. This is Eosinophil cationic protein (Rnase3) from Rattus norvegicus (Rat).